The following is a 413-amino-acid chain: Nucleoporin NUP42 (413 aa).

The C3H1-type zinc-finger motif lies at 1-25; sequence MTICQFFLQGRCRFGDRCWNEHPRG. FG repeat units lie at residues 14–15, 79–80, 217–218, 225–226, 269–270, and 313–314; these read FG. The segment at 252-293 is disordered; sequence GNAAAVGSSAAASNPPTFGVTSSPSVPNPVGSGNSSAPSAAS. Residues 321-357 are compositionally biased toward low complexity; that stretch reads SSSTAPLPVSATPSAATGTSQSGASSASAAQTAGASG. The segment at 321 to 369 is disordered; sequence SSSTAPLPVSATPSAATGTSQSGASSASAAQTAGASGHNVTSAPSAVPN.

Probable component of the nuclear pore complex (NPC).

The protein localises to the nucleus. Its subcellular location is the nuclear pore complex. It is found in the nucleus membrane. Its function is as follows. Required for the export of mRNAs containing poly(A) tails from the nucleus into the cytoplasm. This is Nucleoporin NUP42 (NUP42) from Gallus gallus (Chicken).